The primary structure comprises 437 residues: ATP-dependent RNA helicase SUB2 (437 aa).

Acidic residues predominate over residues 1–19; sequence MSHEAEEDLLEYSDNEQEV. Residues 1-45 are disordered; sequence MSHEAEEDLLEYSDNEQEVQVDNKATEVNAEGNGESQAKDSDKKG. The short motif at 53 to 81 is the Q motif element; that stretch reads TGFKDFLLKPELSRAIIDCGFEHPSEVQQ. A Helicase ATP-binding domain is found at 84 to 259; sequence IPQSIHGTDV…RRFLQNPLEI (176 aa). An ATP-binding site is contributed by 97 to 104; it reads AKSGLGKT. Residues 206 to 209 carry the DECD box motif; sequence DECD. Positions 287–432 constitute a Helicase C-terminal domain; sequence KLAQLLDDLE…EFPEEGVDPS (146 aa).

It belongs to the DEAD box helicase family. DECD subfamily.

Its subcellular location is the nucleus. It carries out the reaction ATP + H2O = ADP + phosphate + H(+). In terms of biological role, ATP-binding RNA helicase involved in transcription elongation and required for the export of mRNA out of the nucleus. SUB2 also plays a role in pre-mRNA splicing and spliceosome assembly. May be involved in rDNA and telomeric silencing, and maintenance of genome integrity. This Kluyveromyces lactis (strain ATCC 8585 / CBS 2359 / DSM 70799 / NBRC 1267 / NRRL Y-1140 / WM37) (Yeast) protein is ATP-dependent RNA helicase SUB2 (SUB2).